The chain runs to 424 residues: UPF0761 membrane protein Smal_0716 (424 aa).

The next 6 membrane-spanning stretches (helical) occupy residues 48-68 (VFALVPLAIVVFGVLSAFPVF), 101-121 (SAGQLTAAGFIALVVSLLITL), 144-164 (FLVYWTVLTLGAMLAAASLAV), 181-201 (WLADLALRLAPILIEFVCITL), 216-236 (AVPGAILAAVILELVKWGIGA), and 251-271 (VAFVPILLLWIYLCWVAVLLG).

Belongs to the UPF0761 family.

It is found in the cell inner membrane. The protein is UPF0761 membrane protein Smal_0716 of Stenotrophomonas maltophilia (strain R551-3).